We begin with the raw amino-acid sequence, 484 residues long: Aldehyde dehydrogenase family 3 member H1 (484 aa).

196–201 provides a ligand contact to NAD(+); it reads GSSKIG. The active-site Proton acceptor is the Glu218. The active-site Nucleophile is the Cys253.

This sequence belongs to the aldehyde dehydrogenase family. As to quaternary structure, homodimer and homomultimer. Isoform alpha is expressed in expanded leaves and flowers. Detected in seedlings. Isoform beta is mainly expressed in flowers. Detected in leaves and seedlings.

It carries out the reaction an aldehyde + NAD(+) + H2O = a carboxylate + NADH + 2 H(+). Thiol-based regulation. Inactivation after dimerization under oxidizing conditions. Involved in oxidative stress tolerance by detoxifying reactive aldehydes derived from lipid peroxidation. Medium- to long-chain saturated aldehydes are preferred substrates, while the short-chain aldehyde propanal is a weak substrate. Is strictely NAD(+) specific. The polypeptide is Aldehyde dehydrogenase family 3 member H1 (ALDH3H1) (Arabidopsis thaliana (Mouse-ear cress)).